Consider the following 236-residue polypeptide: Glucosamine-6-phosphate deaminase (236 aa).

The active-site Proton acceptor; for enolization step is the Asp62. The active-site For ring-opening step is Asn128. His130 (proton acceptor; for ring-opening step) is an active-site residue. Glu135 functions as the For ring-opening step in the catalytic mechanism.

Belongs to the glucosamine/galactosamine-6-phosphate isomerase family. NagB subfamily.

It carries out the reaction alpha-D-glucosamine 6-phosphate + H2O = beta-D-fructose 6-phosphate + NH4(+). It participates in amino-sugar metabolism; N-acetylneuraminate degradation; D-fructose 6-phosphate from N-acetylneuraminate: step 5/5. Catalyzes the reversible isomerization-deamination of glucosamine 6-phosphate (GlcN6P) to form fructose 6-phosphate (Fru6P) and ammonium ion. This Lacticaseibacillus paracasei (strain ATCC 334 / BCRC 17002 / CCUG 31169 / CIP 107868 / KCTC 3260 / NRRL B-441) (Lactobacillus paracasei) protein is Glucosamine-6-phosphate deaminase.